Reading from the N-terminus, the 265-residue chain is Histidine racemase (265 aa).

The Proton acceptor role is filled by Cys67. The Proton donor role is filled by Cys209.

It belongs to the histidine racemase family. In terms of assembly, homodimer.

The enzyme catalyses L-histidine = D-histidine. Its activity is regulated as follows. Activity is not affected by buffer composition (PO(4) or Tris), ions (SO(4)(2-), Mg(2+) and EDTA) or the PLP inhibitor hydroxylamine. However, the activity is hindered by iodoacetamide and Hg(2+), which are known inhibitors of enzymes with catalytic thiols. Functionally, cofactor-independent isomerase that catalyzes the reversible conversion of L-histidine to D-histidine. Shows weak activity with L,L-lanthionine. The catalytic turnover is 10'000-fold faster with L-histidine than with L,L-lanthionine. May play a role in growth of F.nucleatum. The protein is Histidine racemase of Fusobacterium nucleatum subsp. nucleatum (strain ATCC 25586 / DSM 15643 / BCRC 10681 / CIP 101130 / JCM 8532 / KCTC 2640 / LMG 13131 / VPI 4355).